Here is a 538-residue protein sequence, read N- to C-terminus: Fusion glycoprotein F0 (538 aa).

The first 19 residues, Met1–Cys19, serve as a signal peptide directing secretion. The Extracellular segment spans residues Val20–Ile486. 2 N-linked (GlcNAc...) asparagine; by host glycosylation sites follow: Asn56 and Asn73. A fusion peptide region spans residues Phe103–Leu127. Residues Val128 to Glu156 adopt a coiled-coil conformation. An N-linked (GlcNAc...) asparagine; by host glycan is attached at Asn182. 4 cysteine pairs are disulfide-bonded: Cys324–Cys333, Cys348–Cys356, Cys380–Cys385, and Cys387–Cys410. An N-linked (GlcNAc...) asparagine; by host glycan is attached at Asn352. N-linked (GlcNAc...) asparagine; by host glycans are attached at residues Asn427, Asn433, and Asn457. A coiled-coil region spans residues Glu452–Val477. The chain crosses the membrane as a helical span at residues Ile487–Trp507. Residues Ala508–Tyr538 are Cytoplasmic-facing.

This sequence belongs to the paramyxoviruses fusion glycoprotein family. Homotrimer; disulfide-linked F1-F2. Interacts with host LAMP1; LAMP2 and LAMP3; these interactions promote the cleavage of the viral fusion protein F. Post-translationally, the inactive precursor F0 is glycosylated and proteolytically cleaved into F1 and F2 to be functionally active. The cleavage is mediated by cellular proteases including host FURIN during the transport and maturation of the polypeptide.

The protein resides in the virion membrane. It is found in the host cell membrane. Functionally, class I viral fusion protein. Under the current model, the protein has at least 3 conformational states: pre-fusion native state, pre-hairpin intermediate state, and post-fusion hairpin state. During viral and plasma cell membrane fusion, the heptad repeat (HR) regions assume a trimer-of-hairpins structure, positioning the fusion peptide in close proximity to the C-terminal region of the ectodomain. The formation of this structure appears to drive apposition and subsequent fusion of viral and plasma cell membranes. Directs fusion of viral and cellular membranes leading to delivery of the nucleocapsid into the cytoplasm. This fusion is pH independent and occurs directly at the outer cell membrane. The trimer of F1-F2 (F protein) probably interacts with HN at the virion surface. Upon HN binding to its cellular receptor, the hydrophobic fusion peptide is unmasked and interacts with the cellular membrane, inducing the fusion between cell and virion membranes. Later in infection, F proteins expressed at the plasma membrane of infected cells could mediate fusion with adjacent cells to form syncytia, a cytopathic effect that could lead to tissue necrosis. This is Fusion glycoprotein F0 (F) from Mumps virus genotype B (strain Miyahara vaccine) (MuV).